The primary structure comprises 492 residues: Cobyric acid synthase (492 aa).

One can recognise a GATase cobBQ-type domain in the interval 253 to 441; sequence VLKVIAPVYP…LHGLFDTPQA (189 aa). The Nucleophile role is filled by C334. H433 is a catalytic residue.

It belongs to the CobB/CobQ family. CobQ subfamily.

It functions in the pathway cofactor biosynthesis; adenosylcobalamin biosynthesis. Catalyzes amidations at positions B, D, E, and G on adenosylcobyrinic A,C-diamide. NH(2) groups are provided by glutamine, and one molecule of ATP is hydrogenolyzed for each amidation. The polypeptide is Cobyric acid synthase (Azoarcus sp. (strain BH72)).